A 645-amino-acid chain; its full sequence is MGKIKELETSLANKIAAGEVVERPSSVVKELLENAIDAQATEINIEVEQSGVSSIRVVDNGTGIAQEDLGLVFHRHATSKIVADDDLFHIRTLGFRGEALASISSVAKVTLKTCTDNENGHEIYAENGKIIHQKPAKAKKGTDIQVDSLFYNTPARLKYIKSLYTELGKITDIVNRMAMSHPEIRISLVSDGKKLLSTNGSGRTNEVMAEIYGMKVAKDLVHISGDTSDYHLEGFVAKPEHSRSNKHYISIFINGRYIKNFVLNKAILEGYHTLLTIGRFPICYINIQMDPILVDVNVHPTKLEVRLSKEDQLYDLIVTKIREAFKDKILIPQNDLNHASKKNKVLETFEQQKINFEKQQSQIGETSAPYVHDQKDKNHDVESHKNNLDSTSSTNNESTEVSNELHNHIDDSYLQSQKEVLFDMEQNTSNEYEISNQQSNDIKGTVSQTPHRRVPYMEIVGQVHGTYIIAQNENGMFMIDQHAAQERIKYEYFREKIGEVTNEVQNLLIPLTFHFSKDEQMIIDQYKDELDKVGVHLEHFGGHDYIVNSYPVWFPKEEAEEIIKDMIELVLKHKSVDVKKIREDAAIMMSCKKSIKANHYLKNNEMADLIDQLREAEDPFTCPHGRPIIINFSNYELEKLFKRVM.

The tract at residues 371–403 is disordered; that stretch reads VHDQKDKNHDVESHKNNLDSTSSTNNESTEVSN. The segment covering 372–387 has biased composition (basic and acidic residues); that stretch reads HDQKDKNHDVESHKNN. Residues 390-402 are compositionally biased toward low complexity; that stretch reads STSSTNNESTEVS.

The protein belongs to the DNA mismatch repair MutL/HexB family.

In terms of biological role, this protein is involved in the repair of mismatches in DNA. It is required for dam-dependent methyl-directed DNA mismatch repair. May act as a 'molecular matchmaker', a protein that promotes the formation of a stable complex between two or more DNA-binding proteins in an ATP-dependent manner without itself being part of a final effector complex. This Staphylococcus epidermidis (strain ATCC 35984 / DSM 28319 / BCRC 17069 / CCUG 31568 / BM 3577 / RP62A) protein is DNA mismatch repair protein MutL.